Consider the following 544-residue polypeptide: Terpene synthase 9 (544 aa).

Residues D296, D300, and E449 each coordinate Mg(2+). The DDXXD motif motif lies at D296–D300.

The protein belongs to the terpene synthase family. Tpsa subfamily. Mg(2+) is required as a cofactor. Mn(2+) serves as cofactor.

It catalyses the reaction (2E,6E)-farnesyl diphosphate = (1E,4E)-germacrene B + diphosphate. It carries out the reaction (2E)-geranyl diphosphate = terpinolene + diphosphate. The catalysed reaction is (2E)-geranyl diphosphate = limonene + diphosphate. The enzyme catalyses (2E)-geranyl diphosphate = beta-myrcene + diphosphate. It catalyses the reaction (2Z,6Z)-farnesyl diphosphate = germacrene A + diphosphate. It carries out the reaction (2Z,6Z)-farnesyl diphosphate = alpha-humulene + diphosphate. It participates in secondary metabolite biosynthesis; terpenoid biosynthesis. Sesquiterpene synthase involved in the biosynthesis of volatile compounds. Mediates the conversion of (2E,6E)-farnesyl diphosphate (FPP) into (1E,4E)-germacrene B, but also smaller amounts of germacrene A and C, and of (2Z,6Z)-farnesyl diphosphate ((ZZ)-FPP) into alpha-humulene, germacrene A and germacrene B. Can act with a low efficiency as a monoterpene synthase with geranyl diphosphate (GPP) as substrate, thus producing beta-myrcene, limonene and terpinolene. The chain is Terpene synthase 9 from Solanum habrochaites (Wild tomato).